A 426-amino-acid polypeptide reads, in one-letter code: Tol-Pal system protein TolB (426 aa).

The signal sequence occupies residues 1 to 24; that stretch reads MKLKSRYTSLISVVSIFFSSMVMA.

It belongs to the TolB family. The Tol-Pal system is composed of five core proteins: the inner membrane proteins TolA, TolQ and TolR, the periplasmic protein TolB and the outer membrane protein Pal. They form a network linking the inner and outer membranes and the peptidoglycan layer.

The protein localises to the periplasm. Functionally, part of the Tol-Pal system, which plays a role in outer membrane invagination during cell division and is important for maintaining outer membrane integrity. This Haemophilus ducreyi (strain 35000HP / ATCC 700724) protein is Tol-Pal system protein TolB.